The primary structure comprises 141 residues: 6,7-dimethyl-8-ribityllumazine synthase (141 aa).

5-amino-6-(D-ribitylamino)uracil contacts are provided by residues F11, 42 to 44 (ALE), and 66 to 68 (VVI). (2S)-2-hydroxy-3-oxobutyl phosphate is bound at residue 71 to 72 (ET). H74 serves as the catalytic Proton donor. N98 is a binding site for 5-amino-6-(D-ribitylamino)uracil. R112 serves as a coordination point for (2S)-2-hydroxy-3-oxobutyl phosphate.

It belongs to the DMRL synthase family.

The catalysed reaction is (2S)-2-hydroxy-3-oxobutyl phosphate + 5-amino-6-(D-ribitylamino)uracil = 6,7-dimethyl-8-(1-D-ribityl)lumazine + phosphate + 2 H2O + H(+). It participates in cofactor biosynthesis; riboflavin biosynthesis; riboflavin from 2-hydroxy-3-oxobutyl phosphate and 5-amino-6-(D-ribitylamino)uracil: step 1/2. Its function is as follows. Catalyzes the formation of 6,7-dimethyl-8-ribityllumazine by condensation of 5-amino-6-(D-ribitylamino)uracil with 3,4-dihydroxy-2-butanone 4-phosphate. This is the penultimate step in the biosynthesis of riboflavin. The chain is 6,7-dimethyl-8-ribityllumazine synthase from Sphingopyxis alaskensis (strain DSM 13593 / LMG 18877 / RB2256) (Sphingomonas alaskensis).